A 188-amino-acid polypeptide reads, in one-letter code: FMN-dependent NADPH-azoreductase (188 aa).

It belongs to the azoreductase type 2 family. In terms of assembly, homotetramer. FMN is required as a cofactor.

In terms of biological role, catalyzes the reductive cleavage of azo bond in aromatic azo compounds to the corresponding amines. Requires NADPH, but not NADH, as an electron donor for its activity. The polypeptide is FMN-dependent NADPH-azoreductase (azo1) (Staphylococcus epidermidis (strain ATCC 12228 / FDA PCI 1200)).